Here is a 301-residue protein sequence, read N- to C-terminus: tRNA pseudouridine synthase B (301 aa).

The active-site Nucleophile is the Asp45.

It belongs to the pseudouridine synthase TruB family. Type 1 subfamily.

The enzyme catalyses uridine(55) in tRNA = pseudouridine(55) in tRNA. Functionally, responsible for synthesis of pseudouridine from uracil-55 in the psi GC loop of transfer RNAs. This chain is tRNA pseudouridine synthase B, found in Streptomyces coelicolor (strain ATCC BAA-471 / A3(2) / M145).